Reading from the N-terminus, the 346-residue chain is tRNA-specific 2-thiouridylase MnmA (346 aa).

6–13 provides a ligand contact to ATP; it reads AMSGGTDS. Cysteine 90 acts as the Nucleophile in catalysis. A disulfide bond links cysteine 90 and cysteine 187. ATP is bound at residue glycine 114. An interaction with tRNA region spans residues 137-139; the sequence is KDQ. The Cysteine persulfide intermediate role is filled by cysteine 187. The tract at residues 292–293 is interaction with tRNA; that stretch reads RY.

This sequence belongs to the MnmA/TRMU family.

It localises to the cytoplasm. It carries out the reaction S-sulfanyl-L-cysteinyl-[protein] + uridine(34) in tRNA + AH2 + ATP = 2-thiouridine(34) in tRNA + L-cysteinyl-[protein] + A + AMP + diphosphate + H(+). In terms of biological role, catalyzes the 2-thiolation of uridine at the wobble position (U34) of tRNA, leading to the formation of s(2)U34. The chain is tRNA-specific 2-thiouridylase MnmA from Nitratidesulfovibrio vulgaris (strain DP4) (Desulfovibrio vulgaris).